The chain runs to 229 residues: Flagellar brake protein YcgR (229 aa).

The PilZ domain maps to 134–218; the sequence is QLSLRVLDVS…GERALQRYID (85 aa).

Belongs to the YcgR family. As to quaternary structure, monomer. Interacts with the flagellar basal bodies.

It is found in the bacterial flagellum basal body. In terms of biological role, acts as a flagellar brake, regulating swimming and swarming in a bis-(3'-5') cyclic diguanylic acid (c-di-GMP)-dependent manner. Binds 1 c-di-GMP dimer per subunit. Increasing levels of c-di-GMP lead to decreased motility. The polypeptide is Flagellar brake protein YcgR (Methylibium petroleiphilum (strain ATCC BAA-1232 / LMG 22953 / PM1)).